The following is a 636-amino-acid chain: ATP-dependent DNA helicase YoaA (636 aa).

Positions 10-272 constitute a Helicase ATP-binding domain; it reads QLAKAIPGFK…KDTQQLQKCA (263 aa). An ATP-binding site is contributed by 45 to 52; it reads AGTGTGKT. [4Fe-4S] cluster contacts are provided by C108, C168, C173, and C179. Residues 225-228 carry the DEAH box motif; that stretch reads DEAH.

Belongs to the helicase family. DinG subfamily. As to quaternary structure, interacts with the DNA polymerase III subunit Chi (holC), probably as a 1:1 complex. Requires [4Fe-4S] cluster as cofactor. Mg(2+) is required as a cofactor.

It carries out the reaction Couples ATP hydrolysis with the unwinding of duplex DNA at the replication fork by translocating in the 5'-3' direction. This creates two antiparallel DNA single strands (ssDNA). The leading ssDNA polymer is the template for DNA polymerase III holoenzyme which synthesizes a continuous strand.. It catalyses the reaction ATP + H2O = ADP + phosphate + H(+). With respect to regulation, non-hydrolyzable ATP analogs ATP-gamma-S and adenylyl-imidodiphosphate (AMP-PNP) inhibit helicase activity. In terms of biological role, DNA-dependent ATPase and 5'-3' DNA helicase. Has single-stranded (ss)DNA-dependent ATPase activity and 5'-3' helicase activity on forked DNA; both activities were measure in a YoaA:HolC (chi) complex. Requires a 20-35 nucleotide (nt) 5'-ssDNA tail; dsDNA with a 20 nt gap is also unwound. Unwinds damaged 3' nascent ends (such as those terminated by 3' azidothymidine (AZT), 3' dideoxy-C or an abasic site on the translocating strand), to promote repair and AZT excision. Without HolC the protein has much lower activity which could be due to YoaA instability or helicase stimulation by HolC. Genetically identified as involved in the repair of replication forks and tolerance of the chain-terminating nucleoside analog AZT. May act in proofreading during nucleotide misincorporation, it appears to aid in the removal of potential A-to-T transversion mutations in ndk mutants. In Escherichia coli (strain K12), this protein is ATP-dependent DNA helicase YoaA (yoaA).